The following is a 138-amino-acid chain: MTWRQAVLLSCFSAVVLLSMLREGTSVSVGTMQMAGEEASEDAKQKIFMQESDASNFLKRRGKRSPKSRDEVNVENRQKLRVDELRREYYEEQRNEFENFVEEQNDEQEERSREAVEQWRQWHYDGLHPSYLYNRHHT.

An N-terminal signal peptide occupies residues 1 to 26 (MTWRQAVLLSCFSAVVLLSMLREGTS). A propeptide spans 28 to 64 (SVGTMQMAGEEASEDAKQKIFMQESDASNFLKRRGKR) (ucma-N). Residues 90–122 (YEEQRNEFENFVEEQNDEQEERSREAVEQWRQW) adopt a coiled-coil conformation.

It belongs to the UCMA family. Post-translationally, proteolytically cleaved by a furin-like convertase to generate a persistent C-terminal fragment found in almost the entire cartilage matrix, and affecting osteoblast differentiation. In terms of processing, sulfated on tyrosine residues. In terms of tissue distribution, predominantly expressed in resting chondrocytes.

The protein localises to the secreted. It is found in the extracellular space. It localises to the extracellular matrix. In terms of biological role, may be involved in the negative control of osteogenic differentiation of osteochondrogenic precursor cells in peripheral zones of fetal cartilage and at the cartilage-bone interface. The chain is Unique cartilage matrix-associated protein (UCMA) from Homo sapiens (Human).